The chain runs to 72 residues: Exodeoxyribonuclease 7 small subunit (72 aa).

Belongs to the XseB family. As to quaternary structure, heterooligomer composed of large and small subunits.

Its subcellular location is the cytoplasm. The enzyme catalyses Exonucleolytic cleavage in either 5'- to 3'- or 3'- to 5'-direction to yield nucleoside 5'-phosphates.. Functionally, bidirectionally degrades single-stranded DNA into large acid-insoluble oligonucleotides, which are then degraded further into small acid-soluble oligonucleotides. The polypeptide is Exodeoxyribonuclease 7 small subunit (Chlamydia trachomatis serovar L2 (strain ATCC VR-902B / DSM 19102 / 434/Bu)).